A 62-amino-acid chain; its full sequence is UPF0434 protein SPO3421 (62 aa).

The protein belongs to the UPF0434 family.

The sequence is that of UPF0434 protein SPO3421 from Ruegeria pomeroyi (strain ATCC 700808 / DSM 15171 / DSS-3) (Silicibacter pomeroyi).